A 385-amino-acid chain; its full sequence is Cytochrome b (385 aa).

The Mitochondrial matrix portion of the chain corresponds to 1-27 (MAFRKSNVYLSLVNSYIIDSPQPSSIN). Residue tyrosine 16 participates in a ubiquinone binding. A helical membrane pass occupies residues 28-51 (YWWNMGSLLGLCLVIQIVTGIFMA). At 52–74 (MHYSSNIELAFSSVEHIMRDVHN) the chain is on the mitochondrial intermembrane side. Residues 75 to 102 (GYILRYLHANGASFFFMVMFMHMAKGLY) traverse the membrane as a helical segment. Residues histidine 82 and histidine 96 each coordinate heme b. The Mitochondrial matrix portion of the chain corresponds to 103–110 (YGSYRSPR). The helical transmembrane segment at 111–135 (VTLWNVGVIIFILTIATAFLGYCCV) threads the bilayer. Residues 136 to 172 (YGQMSHWGATVITNLFSAIPFVGNDIVSWLWGGFSVS) lie on the Mitochondrial intermembrane side of the membrane. The helical transmembrane segment at 173–204 (NPTIQRFFALHYLVPFIIAAMVIMHLMALHIH) threads the bilayer. Heme b-binding residues include histidine 183 and histidine 197. Histidine 202 provides a ligand contact to a ubiquinone. Residues 205 to 223 (GSSNPLGITGNLDRIPMHS) lie on the Mitochondrial matrix side of the membrane. A helical membrane pass occupies residues 224–246 (YFIFKDLVTVFLFMLILALFVFY). Over 247–287 (SPNTLGHPDNYIPGNPLVTPASIVPEWYLLPFYAILRSIPD) the chain is Mitochondrial intermembrane. The helical transmembrane segment at 288–308 (KLLGVITMFAAILVLLVLPFT) threads the bilayer. The Mitochondrial matrix segment spans residues 309–319 (DRSVVRGNTFK). A helical membrane pass occupies residues 320–340 (VLSKFFFFIFVFNFVLLGQIG). Over 341–347 (ACHVEVP) the chain is Mitochondrial intermembrane. Residues 348–364 (YVLMGQIATFIYFAYFL) form a helical membrane-spanning segment. At 365 to 385 (IIVPVISTIENVLFYIGRVNK) the chain is on the mitochondrial matrix side.

Belongs to the cytochrome b family. As to quaternary structure, component of the ubiquinol-cytochrome c oxidoreductase (cytochrome b-c1 complex, complex III, CIII), a multisubunit enzyme composed of 10 subunits. The complex is composed of 3 respiratory subunits cytochrome b (COB), cytochrome c1 (CYT1) and Rieske protein (RIP1), 2 core protein subunits COR1 and QCR2, and 5 low-molecular weight protein subunits QCR6, QCR7, QCR8, QCR9 and QCR10. The complex exists as an obligatory dimer and forms supercomplexes (SCs) in the inner mitochondrial membrane with a monomer or a dimer of cytochrome c oxidase (complex IV, CIV), resulting in 2 different assemblies (supercomplexes III(2)IV and III(2)IV(2)). The cofactor is heme b.

It is found in the mitochondrion inner membrane. It carries out the reaction a quinol + 2 Fe(III)-[cytochrome c](out) = a quinone + 2 Fe(II)-[cytochrome c](out) + 2 H(+)(out). Functionally, component of the ubiquinol-cytochrome c oxidoreductase, a multisubunit transmembrane complex that is part of the mitochondrial electron transport chain which drives oxidative phosphorylation. The respiratory chain contains 3 multisubunit complexes succinate dehydrogenase (complex II, CII), ubiquinol-cytochrome c oxidoreductase (cytochrome b-c1 complex, complex III, CIII) and cytochrome c oxidase (complex IV, CIV), that cooperate to transfer electrons derived from NADH and succinate to molecular oxygen, creating an electrochemical gradient over the inner membrane that drives transmembrane transport and the ATP synthase. The cytochrome b-c1 complex catalyzes electron transfer from ubiquinol to cytochrome c, linking this redox reaction to translocation of protons across the mitochondrial inner membrane, with protons being carried across the membrane as hydrogens on the quinol. In the process called Q cycle, 2 protons are consumed from the matrix, 4 protons are released into the intermembrane space and 2 electrons are passed to cytochrome c. Cytochrome b is a catalytic core subunit containing 2 b-type hemes BL and BH topographically segregated in the quinone reduction (Qi) and quinol oxidation (Q0) sites on opposite sides of the membrane. In Saccharomyces cerevisiae (strain ATCC 204508 / S288c) (Baker's yeast), this protein is Cytochrome b (COB).